The sequence spans 504 residues: Anaerobic nitric oxide reductase transcription regulator NorR (504 aa).

Asp57 carries the post-translational modification 4-aspartylphosphate. One can recognise a Sigma-54 factor interaction domain in the interval 187-416 (MIGLSPGMTQ…LEHAIHRAVV (230 aa)). Residues 215–222 (GETGTGKE) and 278–287 (ADNGTLFLDE) contribute to the ATP site. Positions 479–498 (WAACARMLETDVANLHRLAK) form a DNA-binding region, H-T-H motif.

It participates in nitrogen metabolism; nitric oxide reduction. In terms of biological role, required for the expression of anaerobic nitric oxide (NO) reductase, acts as a transcriptional activator for at least the norVW operon. Activation also requires sigma-54. In Escherichia coli (strain K12 / MC4100 / BW2952), this protein is Anaerobic nitric oxide reductase transcription regulator NorR.